Consider the following 297-residue polypeptide: N-acetylmuramic acid 6-phosphate etherase (297 aa).

Positions 55–218 (ATDALKSGGR…STGAMVKFGK (164 aa)) constitute an SIS domain. The active-site Proton donor is the E83. The active site involves E114.

Belongs to the GCKR-like family. MurNAc-6-P etherase subfamily. In terms of assembly, homodimer.

The enzyme catalyses N-acetyl-D-muramate 6-phosphate + H2O = N-acetyl-D-glucosamine 6-phosphate + (R)-lactate. Its pathway is amino-sugar metabolism; 1,6-anhydro-N-acetylmuramate degradation. The protein operates within amino-sugar metabolism; N-acetylmuramate degradation. It participates in cell wall biogenesis; peptidoglycan recycling. Functionally, specifically catalyzes the cleavage of the D-lactyl ether substituent of MurNAc 6-phosphate, producing GlcNAc 6-phosphate and D-lactate. Together with AnmK, is also required for the utilization of anhydro-N-acetylmuramic acid (anhMurNAc) either imported from the medium or derived from its own cell wall murein, and thus plays a role in cell wall recycling. The sequence is that of N-acetylmuramic acid 6-phosphate etherase from Enterobacter sp. (strain 638).